The sequence spans 202 residues: MNVKKIYMDADALLEGHFKLSSGNHSQFYLQSAKVLEDPKTAKLLADALALQIKESALEIDTVCAPALGGLIAGFALASALDVRSIFAERVDGVMNLRRGFEIKKGERVLMCEDIITTGGSAMEAAEVVKSLGGEIVGVAALANRGFCKRQNSDVTTKPNCKLPQDIPFFALDDFTFEMYAPEECPMCKSGSEAIKPGSRGN.

E113 to S121 contacts 5-phospho-alpha-D-ribose 1-diphosphate. Residues T117 and R145 each coordinate orotate.

It belongs to the purine/pyrimidine phosphoribosyltransferase family. PyrE subfamily. Homodimer. Requires Mg(2+) as cofactor.

The enzyme catalyses orotidine 5'-phosphate + diphosphate = orotate + 5-phospho-alpha-D-ribose 1-diphosphate. It functions in the pathway pyrimidine metabolism; UMP biosynthesis via de novo pathway; UMP from orotate: step 1/2. Its function is as follows. Catalyzes the transfer of a ribosyl phosphate group from 5-phosphoribose 1-diphosphate to orotate, leading to the formation of orotidine monophosphate (OMP). The sequence is that of Orotate phosphoribosyltransferase from Sulfurimonas denitrificans (strain ATCC 33889 / DSM 1251) (Thiomicrospira denitrificans (strain ATCC 33889 / DSM 1251)).